A 430-amino-acid chain; its full sequence is Histidine--tRNA ligase (430 aa).

This sequence belongs to the class-II aminoacyl-tRNA synthetase family. As to quaternary structure, homodimer.

Its subcellular location is the cytoplasm. The catalysed reaction is tRNA(His) + L-histidine + ATP = L-histidyl-tRNA(His) + AMP + diphosphate + H(+). In Clostridium acetobutylicum (strain ATCC 824 / DSM 792 / JCM 1419 / IAM 19013 / LMG 5710 / NBRC 13948 / NRRL B-527 / VKM B-1787 / 2291 / W), this protein is Histidine--tRNA ligase (hisS).